The primary structure comprises 573 residues: Solute carrier family 41 member 2 (573 aa).

Residues 1–162 (MTNSKGRSIT…KESSGIMALQ (162 aa)) lie on the Extracellular side of the membrane. Residues serine 136 and serine 137 each carry the phosphoserine modification. Residues 163–183 (ILVPFLLAGFGTVSAGMVLDI) form a helical membrane-spanning segment. Over 184–195 (VQHWEVFRKVTE) the chain is Cytoplasmic. A helical transmembrane segment spans residues 196–216 (VFILVPALLGLKGNLEMTLAS). Topologically, residues 217–245 (RLSTAVNIGKMDSPIEKWNLIIGNLALKQ) are extracellular. Residues 246–266 (VQATVVGFLAAVAAIILGWIP) traverse the membrane as a helical segment. Topologically, residues 267–282 (EGKYYLDHSILLCSSS) are cytoplasmic. The helical transmembrane segment at 283-303 (VATAFIASLLQGIIMVGVIVG) threads the bilayer. Topologically, residues 304 to 313 (SKKTGINPDN) are extracellular. Residues 314–334 (VATPIAASFGDLITLAILAWI) traverse the membrane as a helical segment. Topologically, residues 335-347 (SQGLYSCLETYYY) are cytoplasmic. A helical membrane pass occupies residues 348–368 (ISPLVGVFFLALTPIWIIIAA). At 369–376 (KHPATRTV) the chain is on the extracellular side. The chain crosses the membrane as a helical span at residues 377 to 397 (LHSGWEPVITAMVISSIGGLI). Over 398-406 (LDTTVSDPN) the chain is Cytoplasmic. A helical transmembrane segment spans residues 407 to 427 (LVGIVVYTPVINGIGGNLVAI). At 428 to 469 (QASRISTYLHLHSIPGELPDEPKGCYYPFRTFFGPGVNNKSA) the chain is on the extracellular side. A helical membrane pass occupies residues 470-490 (QVLLLLVIPGHLIFLYTIHLM). At 491-498 (KSGHTSLT) the chain is on the cytoplasmic side. The helical transmembrane segment at 499 to 519 (IIFIVVYLFAAVLQVFTLLWI) threads the bilayer. Residues 520–543 (ADWMVHHFWRKGKDPDSFSIPYLT) lie on the Extracellular side of the membrane. Residues 544 to 564 (ALGDLLGTALLALSFHFLWLI) form a helical membrane-spanning segment. At 565–573 (GDRDGDVGD) the chain is on the cytoplasmic side.

The protein belongs to the SLC41A transporter family.

The protein resides in the cell membrane. The enzyme catalyses Mg(2+)(in) = Mg(2+)(out). It carries out the reaction Mn(2+)(in) = Mn(2+)(out). It catalyses the reaction Co(2+)(in) = Co(2+)(out). The catalysed reaction is Ni(2+)(in) = Ni(2+)(out). The enzyme catalyses Fe(2+)(in) = Fe(2+)(out). Acts as a plasma-membrane magnesium transporter. Can also mediate the transport of other divalent metal cations in an order of Ba(2+) &gt; Ni(2+) &gt; Co(2+) &gt; Fe(2+) &gt; Mn(2+). This chain is Solute carrier family 41 member 2 (SLC41A2), found in Macaca fascicularis (Crab-eating macaque).